The sequence spans 235 residues: Ubiquinone/menaquinone biosynthesis C-methyltransferase UbiE (235 aa).

2 residues coordinate S-adenosyl-L-methionine: T60 and D81.

It belongs to the class I-like SAM-binding methyltransferase superfamily. MenG/UbiE family.

It carries out the reaction a 2-demethylmenaquinol + S-adenosyl-L-methionine = a menaquinol + S-adenosyl-L-homocysteine + H(+). It catalyses the reaction a 2-methoxy-6-(all-trans-polyprenyl)benzene-1,4-diol + S-adenosyl-L-methionine = a 5-methoxy-2-methyl-3-(all-trans-polyprenyl)benzene-1,4-diol + S-adenosyl-L-homocysteine + H(+). It functions in the pathway quinol/quinone metabolism; menaquinone biosynthesis; menaquinol from 1,4-dihydroxy-2-naphthoate: step 2/2. It participates in cofactor biosynthesis; ubiquinone biosynthesis. Its function is as follows. Methyltransferase required for the conversion of demethylmenaquinol (DMKH2) to menaquinol (MKH2) and the conversion of 2-polyprenyl-6-methoxy-1,4-benzoquinol (DDMQH2) to 2-polyprenyl-3-methyl-6-methoxy-1,4-benzoquinol (DMQH2). The chain is Ubiquinone/menaquinone biosynthesis C-methyltransferase UbiE from Geotalea daltonii (strain DSM 22248 / JCM 15807 / FRC-32) (Geobacter daltonii).